We begin with the raw amino-acid sequence, 196 residues long: PRADC1-like protein (196 aa).

The first 18 residues, 1-18, serve as a signal peptide directing secretion; the sequence is MLIAWLVLAATLSRSIRA. The region spanning 73–171 is the PA domain; sequence ITDPPGACQE…STLQRLKRVH (99 aa). Residue asparagine 179 is glycosylated (N-linked (GlcNAc...) asparagine).

It localises to the secreted. Functionally, may be involved in iversification of muscle cell fates. The polypeptide is PRADC1-like protein (Drosophila melanogaster (Fruit fly)).